Consider the following 483-residue polypeptide: Fructose-like PTS system EIIBC component (483 aa).

The region spanning 1–105 (MESSLRIVAI…IDQIFSELPT (105 aa)) is the PTS EIIB type-2 domain. C13 (phosphocysteine intermediate; for EIIB activity) is an active-site residue. Phosphocysteine; by EIIA is present on C13. The region spanning 128-475 (VMSHLMAGVS…LWLRRKAKAA (348 aa)) is the PTS EIIC type-2 domain. 10 helical membrane passes run 132–152 (LMAG…LVAL), 180–200 (IGYL…ASSI), 204–224 (PAFA…LLGT), 227–247 (GAGF…VFWF), 264–284 (LIPF…IGPV), 303–323 (MKFA…GGPI), 344–364 (AIVG…TFIA), 380–400 (IVVG…AAPL), 402–422 (MITA…AFGI), and 442–462 (VGSF…FIIV).

Its subcellular location is the cell inner membrane. The enzyme catalyses D-fructose(out) + N(pros)-phospho-L-histidyl-[protein] = D-fructose 1-phosphate(in) + L-histidyl-[protein]. Its function is as follows. The phosphoenolpyruvate-dependent sugar phosphotransferase system (sugar PTS), a major carbohydrate active transport system, catalyzes the phosphorylation of incoming sugar substrates concomitantly with their translocation across the cell membrane. The enzyme II FrvAB PTS system is involved in fructose transport. The chain is Fructose-like PTS system EIIBC component from Escherichia coli (strain K12).